The following is a 63-amino-acid chain: Beta-defensin 38 (63 aa).

An N-terminal signal peptide occupies residues 1–21; sequence MKISCFLLLILSLYFFQINQA. Cystine bridges form between cysteine 29–cysteine 58, cysteine 36–cysteine 51, and cysteine 41–cysteine 59.

This sequence belongs to the beta-defensin family. In terms of tissue distribution, only expressed in epididymis (caput, corpus and cauda).

It localises to the secreted. Functionally, synthetic Defb38 kills both Gram-negative (E.coli and P.aeruginosa) and Gram-positive (E.faecium) bacteria. The polypeptide is Beta-defensin 38 (Defb38) (Mus musculus (Mouse)).